A 404-amino-acid chain; its full sequence is Cysteine desulfurase IscS (404 aa).

Residues 73 to 74, N153, Q181, and 201 to 203 each bind pyridoxal 5'-phosphate; these read AT and SAH. K204 carries the N6-(pyridoxal phosphate)lysine modification. T241 lines the pyridoxal 5'-phosphate pocket. C327 serves as the catalytic Cysteine persulfide intermediate. [2Fe-2S] cluster is bound at residue C327.

It belongs to the class-V pyridoxal-phosphate-dependent aminotransferase family. NifS/IscS subfamily. In terms of assembly, homodimer. Forms a heterotetramer with IscU, interacts with other sulfur acceptors. Pyridoxal 5'-phosphate serves as cofactor.

Its subcellular location is the cytoplasm. It catalyses the reaction (sulfur carrier)-H + L-cysteine = (sulfur carrier)-SH + L-alanine. It participates in cofactor biosynthesis; iron-sulfur cluster biosynthesis. In terms of biological role, master enzyme that delivers sulfur to a number of partners involved in Fe-S cluster assembly, tRNA modification or cofactor biosynthesis. Catalyzes the removal of elemental sulfur atoms from cysteine to produce alanine. Functions as a sulfur delivery protein for Fe-S cluster synthesis onto IscU, an Fe-S scaffold assembly protein, as well as other S acceptor proteins. This Anaeromyxobacter dehalogenans (strain 2CP-C) protein is Cysteine desulfurase IscS.